Consider the following 353-residue polypeptide: Photosystem II D2 protein (353 aa).

Thr2 bears the N-acetylthreonine mark. The residue at position 2 (Thr2) is a Phosphothreonine. Residues 41 to 61 (CAYFALGGWFTGTTFVTSWYT) form a helical membrane-spanning segment. Chlorophyll a is bound at residue His118. The helical transmembrane segment at 125–141 (GFMLRQFEIARSVQLRP) threads the bilayer. 2 residues coordinate pheophytin a: Gln130 and Asn143. A helical transmembrane segment spans residues 153-166 (VFVSVFLIYPLGQS). A chlorophyll a-binding site is contributed by His198. Residues 208–228 (AALLCAIHGATVENTLFEDGD) form a helical membrane-spanning segment. A plastoquinone contacts are provided by His215 and Phe262. His215 contributes to the Fe cation binding site. Fe cation is bound at residue His269. The chain crosses the membrane as a helical span at residues 279–295 (GLWMSALGVVGLALNLR).

The protein belongs to the reaction center PufL/M/PsbA/D family. As to quaternary structure, PSII is composed of 1 copy each of membrane proteins PsbA, PsbB, PsbC, PsbD, PsbE, PsbF, PsbH, PsbI, PsbJ, PsbK, PsbL, PsbM, PsbT, PsbX, PsbY, PsbZ, Psb30/Ycf12, at least 3 peripheral proteins of the oxygen-evolving complex and a large number of cofactors. It forms dimeric complexes. It depends on The D1/D2 heterodimer binds P680, chlorophylls that are the primary electron donor of PSII, and subsequent electron acceptors. It shares a non-heme iron and each subunit binds pheophytin, quinone, additional chlorophylls, carotenoids and lipids. There is also a Cl(-1) ion associated with D1 and D2, which is required for oxygen evolution. The PSII complex binds additional chlorophylls, carotenoids and specific lipids. as a cofactor.

Its subcellular location is the plastid. It localises to the chloroplast thylakoid membrane. The enzyme catalyses 2 a plastoquinone + 4 hnu + 2 H2O = 2 a plastoquinol + O2. Its function is as follows. Photosystem II (PSII) is a light-driven water:plastoquinone oxidoreductase that uses light energy to abstract electrons from H(2)O, generating O(2) and a proton gradient subsequently used for ATP formation. It consists of a core antenna complex that captures photons, and an electron transfer chain that converts photonic excitation into a charge separation. The D1/D2 (PsbA/PsbD) reaction center heterodimer binds P680, the primary electron donor of PSII as well as several subsequent electron acceptors. D2 is needed for assembly of a stable PSII complex. This is Photosystem II D2 protein from Oenothera argillicola (Appalachian evening primrose).